Reading from the N-terminus, the 521-residue chain is SET and MYND domain-containing protein DDB_G0292140 (521 aa).

The interval 1 to 101 (MDGVIESPSN…KIKKSKKSIK (101 aa)) is disordered. Positions 12 to 55 (TIKISPSTSDSSTTTPIITTPPTQSTATVTTKAAATTTTTEAST) are enriched in low complexity. Pro residues predominate over residues 56–65 (TPPPPQPTPT). The segment covering 66–90 (PTQSTATVTKEVETTTETIPPIVTK) has biased composition (low complexity). Over residues 91–101 (GKIKKSKKSIK) the composition is skewed to basic residues. Residues 122-406 (WPIHVYSHPI…EGDELTISYI (285 aa)) form the SET domain. Residues cysteine 167, cysteine 170, cysteine 188, cysteine 191, cysteine 197, cysteine 201, histidine 209, and cysteine 213 each coordinate Zn(2+). An MYND-type zinc finger spans residues 167–213 (CQHCFLEVPLNQQILPTDFYMCEGCQRVGYCSANCRCIDYSQHRFEC). Positions 442–521 (QTGTLEKDDD…QDHQNNDKSN (80 aa)) are disordered. A compositionally biased stretch (acidic residues) spans 448 to 469 (KDDDDNDDEKEKMDEDDDEKDD). Basic and acidic residues predominate over residues 470-485 (DINNKNDKKSKYKSDG). A compositionally biased stretch (acidic residues) spans 486 to 495 (STDDEEDEDN). The segment covering 497–514 (NNKNNNKNKNNNSNNQDH) has biased composition (low complexity).

It belongs to the class V-like SAM-binding methyltransferase superfamily.

In terms of biological role, probable methyltransferase. This Dictyostelium discoideum (Social amoeba) protein is SET and MYND domain-containing protein DDB_G0292140.